A 214-amino-acid chain; its full sequence is UPF0301 protein NFA_55110 (214 aa).

Residues 1 to 24 (MARADDPDERKTQGGHGDRRRREF) form a disordered region.

It belongs to the UPF0301 (AlgH) family.

This chain is UPF0301 protein NFA_55110, found in Nocardia farcinica (strain IFM 10152).